A 430-amino-acid chain; its full sequence is Alpha-1,6-mannosyl-glycoprotein 2-beta-N-acetylglucosaminyltransferase (430 aa).

The Cytoplasmic portion of the chain corresponds to 1-12; sequence MANLWKKQRLRD. The chain crosses the membrane as a helical; Signal-anchor for type II membrane protein span at residues 13–35; that stretch reads TGLCRLGILFAVTLSIVLMLVSV. The Lumenal portion of the chain corresponds to 36–430; that stretch reads PRTALNGSSI…YRYSSSSASP (395 aa). Residues Asn41 and Asn61 are each glycosylated (N-linked (GlcNAc...) asparagine). Residues 104 to 108 and Asp135 each bind substrate; that span reads YVHNR. A disulfide bridge links Cys177 with Cys188. Substrate is bound at residue 205–209; sequence SLKHH. Asp237 contributes to the Mn(2+) binding site. Residues Cys259 and Cys262 are joined by a disulfide bond. Asn295 carries N-linked (GlcNAc...) asparagine glycosylation. An intrachain disulfide couples Cys310 to Cys414. His345 is a binding site for Mn(2+).

Belongs to the glycosyltransferase 16 (GT16) protein family. The cofactor is Mn(2+).

Its subcellular location is the golgi apparatus membrane. It carries out the reaction an N(4)-{beta-D-GlcNAc-(1-&gt;2)-alpha-D-Man-(1-&gt;3)-[alpha-D-Man-(1-&gt;6)]-beta-D-Man-(1-&gt;4)-beta-D-GlcNAc-(1-&gt;4)-beta-D-GlcNAc}-L-asparaginyl-[protein] + UDP-N-acetyl-alpha-D-glucosamine = N(4)-{beta-D-GlcNAc-(1-&gt;2)-alpha-D-Man-(1-&gt;3)-[beta-D-GlcNAc-(1-&gt;2)-alpha-D-Man-(1-&gt;6)]-beta-D-Man-(1-&gt;4)-beta-D-GlcNAc-(1-&gt;4)-beta-D-GlcNAc}-L-asparaginyl-[protein] + UDP + H(+). Its pathway is protein modification; protein glycosylation. Its function is as follows. Catalyzes an essential step in the conversion of oligo-mannose and hybrid to complex N-glycans. The protein is Alpha-1,6-mannosyl-glycoprotein 2-beta-N-acetylglucosaminyltransferase of Arabidopsis thaliana (Mouse-ear cress).